A 294-amino-acid polypeptide reads, in one-letter code: NAD kinase (294 aa).

D73 acts as the Proton acceptor in catalysis. NAD(+) contacts are provided by residues D73 to G74, N147 to E148, H158, R175, D177, and T188 to S193.

It belongs to the NAD kinase family. Requires a divalent metal cation as cofactor.

The protein localises to the cytoplasm. It catalyses the reaction NAD(+) + ATP = ADP + NADP(+) + H(+). Involved in the regulation of the intracellular balance of NAD and NADP, and is a key enzyme in the biosynthesis of NADP. Catalyzes specifically the phosphorylation on 2'-hydroxyl of the adenosine moiety of NAD to yield NADP. In Tolumonas auensis (strain DSM 9187 / NBRC 110442 / TA 4), this protein is NAD kinase.